A 51-amino-acid polypeptide reads, in one-letter code: Astexin-1 (51 aa).

The propeptide occupies 1-28; the sequence is MHTPIISETVQPKTAGLIVLGKASAETR. The segment at residues 29–37 is a cross-link (isoaspartyl glycine isopeptide (Gly-Asp)); the sequence is GLSQGVEPD.

In terms of processing, this lasso peptide is probably hydrolyzed to a linear form by the isopeptidase AtxE1, in vivo.

Its function is as follows. Shows weak antimicrobial activity against its phylogenetic relative Caulobacter crescentus. Does not show activity against other bacteria tested (E.coli, Vibrio sp, Burkhoderia thailandensis, and Salmonella newport). This is Astexin-1 from Asticcacaulis excentricus (strain ATCC 15261 / DSM 4724 / KCTC 12464 / NCIMB 9791 / VKM B-1370 / CB 48).